A 128-amino-acid chain; its full sequence is MEREECSSSESGWTTYISSRMEEEEEEVIDEVYYEGHIIEKDRRKYANEYEINKDSDDSMASDASSGPSYHQTSNRGKRREGLALRNGKGESNDVYSHRIDDKNIGNLISRKKEKKKSENKSRSHKKK.

Disordered regions lie at residues 1–26 and 54–128; these read MERE…EEEE and KDSD…HKKK. Polar residues predominate over residues 8–18; sequence SSESGWTTYIS. The SOFL-A motif lies at 11-16; the sequence is SGWTTY. The SOFL-B motif lies at 59-68; sequence SMASDASSGP. Positions 80–104 are enriched in basic and acidic residues; it reads REGLALRNGKGESNDVYSHRIDDKN. Positions 111-118 match the Nuclear localization signal motif; it reads RKKEKKKS.

This sequence belongs to the SOFL plant protein family. Expressed in seedlings, roots, flowers and siliques.

The protein localises to the cytoplasm. It localises to the nucleus. Its function is as follows. Involved in cytokinin-mediated development. The protein is Protein SOB FIVE-LIKE 3 of Arabidopsis thaliana (Mouse-ear cress).